We begin with the raw amino-acid sequence, 342 residues long: UDP-glucuronic acid decarboxylase 3 (342 aa).

Polar residues predominate over residues 1-11; the sequence is MAATSEKQNTT. Residues 1–22 form a disordered region; that stretch reads MAATSEKQNTTKPPPSPSPLRN. Position 61 to 86 (61 to 86) interacts with NAD(+); it reads DNYFTGSKENLKKWIGHPRFELIRHD. Arg170 lines the substrate pocket. Catalysis depends on Tyr173, which acts as the Proton acceptor. 173–177 provides a ligand contact to NAD(+); that stretch reads YDEGK. Residue Asn202 participates in substrate binding. Residue Arg214 coordinates NAD(+). Residues 215 to 219, 232 to 239, and 299 to 303 contribute to the substrate site; these read VVSNF, QKPGTQTR, and DPRQR.

The protein belongs to the NAD(P)-dependent epimerase/dehydratase family. UDP-glucuronic acid decarboxylase subfamily. NAD(+) serves as cofactor. Ubiquitous.

It localises to the cytoplasm. The catalysed reaction is UDP-alpha-D-glucuronate + H(+) = UDP-alpha-D-xylose + CO2. It participates in nucleotide-sugar biosynthesis; UDP-alpha-D-xylose biosynthesis; UDP-alpha-D-xylose from UDP-alpha-D-glucuronate: step 1/1. Its function is as follows. Catalyzes the NAD-dependent decarboxylation of UDP-glucuronic acid to UDP-xylose. Necessary for the biosynthesis of the core tetrasaccharide in glycosaminoglycan biosynthesis. The polypeptide is UDP-glucuronic acid decarboxylase 3 (UXS3) (Arabidopsis thaliana (Mouse-ear cress)).